A 27-amino-acid polypeptide reads, in one-letter code: uncharacterized protein (27 aa).

This is an uncharacterized protein from Archaeoglobus fulgidus (strain ATCC 49558 / DSM 4304 / JCM 9628 / NBRC 100126 / VC-16).